A 455-amino-acid chain; its full sequence is Phosphoglucosamine mutase (455 aa).

S108 acts as the Phosphoserine intermediate in catalysis. Mg(2+) is bound by residues S108, D248, D250, and D252. A Phosphoserine modification is found at S108.

The protein belongs to the phosphohexose mutase family. It depends on Mg(2+) as a cofactor. Activated by phosphorylation.

The catalysed reaction is alpha-D-glucosamine 1-phosphate = D-glucosamine 6-phosphate. Catalyzes the conversion of glucosamine-6-phosphate to glucosamine-1-phosphate. This is Phosphoglucosamine mutase from Leuconostoc mesenteroides subsp. mesenteroides (strain ATCC 8293 / DSM 20343 / BCRC 11652 / CCM 1803 / JCM 6124 / NCDO 523 / NBRC 100496 / NCIMB 8023 / NCTC 12954 / NRRL B-1118 / 37Y).